Reading from the N-terminus, the 118-residue chain is Large ribosomal subunit protein bL20 (118 aa).

The protein belongs to the bacterial ribosomal protein bL20 family.

Its function is as follows. Binds directly to 23S ribosomal RNA and is necessary for the in vitro assembly process of the 50S ribosomal subunit. It is not involved in the protein synthesizing functions of that subunit. This is Large ribosomal subunit protein bL20 from Francisella tularensis subsp. holarctica (strain FTNF002-00 / FTA).